We begin with the raw amino-acid sequence, 656 residues long: Putative cysteine-rich receptor-like protein kinase 32 (656 aa).

A signal peptide spans 1–23 (MCLQNLLSILCFVLAISFGYVSA). Gnk2-homologous domains follow at residues 24 to 126 (QKCV…NSSF) and 134 to 238 (PTMV…GSEY). Residues 24 to 262 (QKCVDSMFFR…PDGKTISTGA (239 aa)) are Extracellular-facing. Residues Asn-35, Asn-52, Asn-61, Asn-103, and Asn-123 are each glycosylated (N-linked (GlcNAc...) asparagine). Residues 263 to 283 (IVAVVVSVVIFVVLLALVLVI) form a helical membrane-spanning segment. The Cytoplasmic segment spans residues 284–656 (RKRRQSYKTL…SASITRVTPR (373 aa)). The Protein kinase domain maps to 321–606 (FSRNNKLGKG…IFQMLTNSSI (286 aa)). Residues 327 to 335 (LGKGGFGEV) and Lys-349 contribute to the ATP site. Tyr-394 carries the post-translational modification Phosphotyrosine. Catalysis depends on Asp-454, which acts as the Proton acceptor. Ser-458 is modified (phosphoserine). Phosphothreonine is present on Thr-494. Residue Tyr-502 is modified to Phosphotyrosine.

It belongs to the protein kinase superfamily. Ser/Thr protein kinase family. CRK subfamily.

The protein localises to the membrane. The catalysed reaction is L-seryl-[protein] + ATP = O-phospho-L-seryl-[protein] + ADP + H(+). It carries out the reaction L-threonyl-[protein] + ATP = O-phospho-L-threonyl-[protein] + ADP + H(+). The polypeptide is Putative cysteine-rich receptor-like protein kinase 32 (CRK32) (Arabidopsis thaliana (Mouse-ear cress)).